A 112-amino-acid chain; its full sequence is Diuretic hormone class 2 (112 aa).

The signal sequence occupies residues 1-24; sequence MVRATCLLASCVLFALLLIVPASA. Residues 25–71 constitute a propeptide that is removed on maturation; the sequence is YPRYPSNYFREEGQYEPEEIMDMLNRLGNLIQMERKMENYKEDITSE. Residue Pro104 is modified to Proline amide. A propeptide spanning residues 108 to 112 is cleaved from the precursor; the sequence is RRDAH.

As to expression, expressed in corpora cardiaca (CC), corpora allata (CA), antennal lobe (AL) and gnathal ganglion (GNG) (at protein level). Expression in CC, CA and AL detected in most animals, expression in GNG in few animals (at protein level).

The protein resides in the secreted. Functionally, regulation of fluid secretion. Stimulates Malpighian tubule fluid secretion. The polypeptide is Diuretic hormone class 2 (Agrotis ipsilon (Black cutworm moth)).